The sequence spans 147 residues: Calcium-regulated heat stable protein 1 (147 aa).

A compositionally biased stretch (pro residues) spans 1–12 (MSSEPPPPPQPP). Positions 1–49 (MSSEPPPPPQPPTHQTSIGLLDTPRARDRSPSPLRGNVVPSPLPTRRTR) are disordered. Serine 2 bears the N-acetylserine mark. Residues serine 30, serine 32, and serine 41 each carry the phosphoserine modification. Threonine 45 carries the phosphothreonine modification. Serine 52 and serine 58 each carry phosphoserine. The 68-residue stretch at 62–129 (VYKGVCKCFC…KLQAVEVVIT (68 aa)) folds into the CSD domain. Phosphoserine occurs at positions 146 and 147.

In terms of assembly, homodimer. Interacts with STYX. Can be phosphorylated by DYRK2 (in vitro). Dephosphorylated by calcineurin in a Ca(2+) dependent manner, and probably by PP2A or PP4 serine phosphatases in cAMP- and PKC-mediated pathways. Widely expressed.

The protein resides in the cytoplasm. The protein localises to the P-body. It localises to the cytoplasmic granule. Its function is as follows. Binds mRNA and regulates the stability of target mRNA. The polypeptide is Calcium-regulated heat stable protein 1 (Carhsp1) (Rattus norvegicus (Rat)).